The sequence spans 712 residues: Lactoperoxidase (712 aa).

Residues 1-22 (MWVCLQLPVFLASVTLFEVAAS) form the signal peptide. A propeptide spanning residues 23-100 (DTIAQAASTT…WEESLKRLRR (78 aa)) is cleaved from the precursor. The N-linked (GlcNAc...) asparagine glycan is linked to Asn-106. 4 disulfide bridges follow: Cys-123/Cys-284, Cys-132/Cys-145, Cys-246/Cys-256, and Cys-250/Cys-274. Residue Asn-212 is glycosylated (N-linked (GlcNAc...) asparagine). Residue Asp-225 coordinates heme b. The active-site Proton acceptor is the His-226. Asp-227 contacts Ca(2+). Residues Thr-301, Phe-303, Asp-305, and Ser-307 each contribute to the Ca(2+) site. Phosphoserine is present on Ser-315. Residues Asn-322 and Asn-358 are each glycosylated (N-linked (GlcNAc...) asparagine). A disulfide bond links Cys-354 and Cys-365. Glu-375 contacts heme b. An N-linked (GlcNAc...) asparagine glycan is attached at Asn-449. His-468 is a heme b binding site. Tyr-482 is subject to 3'-nitrotyrosine. Disulfide bonds link Cys-573-Cys-630 and Cys-671-Cys-696.

It belongs to the peroxidase family. XPO subfamily. Requires Ca(2+) as cofactor. The cofactor is heme b. In terms of tissue distribution, mammary gland; milk.

It is found in the secreted. Its subcellular location is the cytoplasm. The enzyme catalyses 2 a phenolic donor + H2O2 = 2 a phenolic radical donor + 2 H2O. It carries out the reaction thiocyanate + H2O2 + H(+) = hypothiocyanous acid + H2O. It catalyses the reaction iodide + H2O2 = hypoiodite + H2O. In terms of biological role, heme-containing oxidoreductase which catalyzes the conversion of thiocyanate (SCN(-)) into antimicrobial agent hypothiocyanous acid (OSCN(-)) in the presence of hydrogen peroxide (H2O2). Also involved in the conversion of iodide (I(-)) into hypoiodite (IO(-)) in the presence of H2O2. Responsible for the inactivation of a wide range of micro-organisms and hence, important component of defense mechanism. The lactoperoxidase-SCN(-)-H2O2 system shows antibacterial properties against some streptococci strains. The lactoperoxidase-I(-)-H2O2 system shows antibacterial properties against E.coli. May protect the udder from infection and may promote growth in newborns. May be implicated in airway host defense against infection. May contribute to maintaining an appropriate H2O2 cellular level, therefore protecting cells from H2O2-caused injuries and inflammation. The sequence is that of Lactoperoxidase (LPO) from Bos taurus (Bovine).